A 1206-amino-acid polypeptide reads, in one-letter code: Methionine synthase (1206 aa).

A Hcy-binding domain is found at Met1 to Val314. Zn(2+) is bound by residues Cys233, Cys299, and Cys300. The 260-residue stretch at Val350–Leu609 folds into the Pterin-binding domain. The B12-binding N-terminal domain occupies Arg642 to Gly735. Residues Lys740–Pro877 form the B12-binding domain. Methylcob(III)alamin is bound by residues Gly750–Asp754, His753, Ser798, and Ala856. The interval Glu873–Pro925 is disordered. The segment covering Glu886–Ala897 has biased composition (basic and acidic residues). The segment covering Arg898–Val907 has biased composition (basic residues). One can recognise an AdoMet activation domain in the interval Val907–Val1206. Basic and acidic residues predominate over residues Lys910–Val924. Residues Asp954, Arg1149, and Tyr1203 to Phe1204 each bind S-adenosyl-L-methionine.

This sequence belongs to the vitamin-B12 dependent methionine synthase family. Requires methylcob(III)alamin as cofactor. Zn(2+) is required as a cofactor.

The catalysed reaction is (6S)-5-methyl-5,6,7,8-tetrahydrofolate + L-homocysteine = (6S)-5,6,7,8-tetrahydrofolate + L-methionine. It functions in the pathway amino-acid biosynthesis; L-methionine biosynthesis via de novo pathway; L-methionine from L-homocysteine (MetH route): step 1/1. In terms of biological role, catalyzes the transfer of a methyl group from methyl-cobalamin to homocysteine, yielding enzyme-bound cob(I)alamin and methionine. Subsequently, remethylates the cofactor using methyltetrahydrofolate. The protein is Methionine synthase (metH) of Mycobacterium leprae (strain TN).